Here is a 209-residue protein sequence, read N- to C-terminus: Putative 3-methyladenine DNA glycosylase (209 aa).

The interval 189–209 (HVSTTRLGAPKKKRQKRLERR) is disordered. Residues 197–209 (APKKKRQKRLERR) show a composition bias toward basic residues.

Belongs to the DNA glycosylase MPG family.

This chain is Putative 3-methyladenine DNA glycosylase, found in Chlorobaculum parvum (strain DSM 263 / NCIMB 8327) (Chlorobium vibrioforme subsp. thiosulfatophilum).